Consider the following 206-residue polypeptide: MGKMDEMILVAPRDDVFKKESLTFQGVYSEDSRVAEIMAQIEAAYREMRRGDAEEDPRFKQPIPYVVIKREDEVFLYERLAGGGESRLHNKLSLGFGGHMNAIEGAASFAEVLKLNTDRELEEELQINEEDKQAIVTLGLINDDENSVGKVHIGILSALQLKPGAQVEVKEKEQIAGKWMKVSELKQDDIYNRLETWSQFVVDILE.

This chain is Protein YmaB (ymaB), found in Bacillus subtilis (strain 168).